The primary structure comprises 155 residues: MSRRGTAEEKTAKSDPIYRNRLVNMLVNRILKHGKKSLAYQILYRAMKKIQQKTETNPLSVLHQAIRGVTPDIAVKARRVGGSTHQVPIEIGSTQGKALAIRWLLGASRKRPGRNMVFKLSSELVDAAKGSGDAIRKKEETHRMAEANRAFAHFR.

Belongs to the universal ribosomal protein uS7 family. Part of the 30S ribosomal subunit.

Its subcellular location is the plastid. The protein localises to the chloroplast. One of the primary rRNA binding proteins, it binds directly to 16S rRNA where it nucleates assembly of the head domain of the 30S subunit. In Populus trichocarpa (Western balsam poplar), this protein is Small ribosomal subunit protein uS7cz/uS7cy (rps7-A).